The chain runs to 144 residues: L-fucose mutarotase (144 aa).

Catalysis depends on H22, which acts as the Proton donor. Residues D30, R109, and 131–133 (YGN) contribute to the substrate site.

The protein belongs to the RbsD / FucU family. FucU mutarotase subfamily. In terms of assembly, homodecamer.

It localises to the cytoplasm. The catalysed reaction is alpha-L-fucose = beta-L-fucose. It functions in the pathway carbohydrate metabolism; L-fucose metabolism. Functionally, involved in the anomeric conversion of L-fucose. In Haemophilus influenzae (strain PittEE), this protein is L-fucose mutarotase.